The sequence spans 845 residues: Beta-mannosidase B (845 aa).

N-linked (GlcNAc...) asparagine glycosylation occurs at N252. The Proton donor role is filled by E432. N-linked (GlcNAc...) asparagine glycosylation is found at N717 and N723.

Belongs to the glycosyl hydrolase 2 family. Beta-mannosidase B subfamily.

The enzyme catalyses Hydrolysis of terminal, non-reducing beta-D-mannose residues in beta-D-mannosides.. The protein operates within glycan metabolism; N-glycan degradation. In terms of biological role, exoglycosidase that cleaves the single beta-linked mannose residue from the non-reducing end of beta-mannosidic oligosaccharides of various complexity and length. Prefers mannobiose over mannotriose and has no activity against polymeric mannan. Is also severely restricted by galactosyl substitutions at the +1 subsite. In Aspergillus fumigatus (strain CBS 144.89 / FGSC A1163 / CEA10) (Neosartorya fumigata), this protein is Beta-mannosidase B (mndB).